We begin with the raw amino-acid sequence, 473 residues long: Probable ribonuclease FAU-1 (473 aa).

Belongs to the FAU-1 family.

Its function is as follows. Probable RNase involved in rRNA stability through maturation and/or degradation of precursor rRNAs. Binds to RNA in loop regions with AU-rich sequences. The sequence is that of Probable ribonuclease FAU-1 from Hyperthermus butylicus (strain DSM 5456 / JCM 9403 / PLM1-5).